We begin with the raw amino-acid sequence, 464 residues long: MMARRDPTSWAKRLVRAQTLQKQRRAPVGPRAPPPDEEDPRLKCKNCGAFGHTARSTRCPMKCWKAALVPATLGKKEGKENLKPWKPRVEANPGPLNKDKGEKEERPRQQDPQRKALLHMFSGKPPEKPLPNGKGSTEPSDYLRVASGPMPVHTTSKRPRLDPVLADRSATEMSGRGSVLASLSPLRKASLSSSSSLGPKERQTGAAADMPQPAVRHQGREPLLVVKPTHSRPEGDCREVPQAASKTHGLLQAARPQAQDKRPAVTSQPCPPAATHSLGLGSNLSFGPGAKRPAQAPIQACLNFPKKPRLGPFQIPESAIQGGELGAPENLQPPPAATELGPSTSPQMGRRTPAQVPSVDRQPPHSRPCLPTAQACTMSHHPAASHDGAQPLRVLFRRLENGRWSSSLLAAPSFHSPEKPGAFLAQSPHVSEKSEAPCVRVPPSVLYEDLQVSSSSEDSDSDLE.

3 disordered regions span residues 1–42, 70–389, and 411–437; these read MMAR…DPRL, PATL…HDGA, and APSF…SEAP. 2 stretches are compositionally biased toward basic and acidic residues: residues 74-89 and 97-114; these read GKKE…KPRV and NKDK…DPQR. Residues 180–197 show a composition bias toward low complexity; sequence LASLSPLRKASLSSSSSL.

Belongs to the FAM90 family.

The protein is Protein FAM90A14 of Homo sapiens (Human).